The following is a 362-amino-acid chain: MTKPTEDDPKGISRRPAAFSLEQEASREGAHTKTTAETPRRKPQSFDTEIVLTPDEEDPFLNPALTASDAEAAIAAPRRRRFSFGKVALSAFGILVSLAFGLWTDELIRNLFSRADWLGYTALTVLAIGILAVLAIVVRETAGMMRLAAVQTIKAEADAAVVETRPARAKALVQRLCTLLEANPATAKGRATLKAAEDDIIDAPHLIDLAERELLGPLDRSARVLILGASKRVSVVTAVSPRALVDILYVLYESAKLVRAMAELYGGRPGGLGMLKLMRDVLAHLAVTGSIAVGDSIVQQLIGHGLASKLSARLGEGVVNGMMTARIGIAAMDLCRPLSFKALKRPGIGDFVGDLAPNITGR.

A compositionally biased stretch (basic and acidic residues) spans 1–11; it reads MTKPTEDDPKG. A disordered region spans residues 1–47; it reads MTKPTEDDPKGISRRPAAFSLEQEASREGAHTKTTAETPRRKPQSFD. The next 2 helical transmembrane spans lie at 82–102 and 118–138; these read FSFG…AFGL and LGYT…AIVV.

This sequence belongs to the UPF0283 family.

It localises to the cell inner membrane. This Rhizobium rhizogenes (strain K84 / ATCC BAA-868) (Agrobacterium radiobacter) protein is UPF0283 membrane protein Arad_2632.